A 767-amino-acid chain; its full sequence is Protein transport protein Sec23B (767 aa).

An N-acetylalanine modification is found at A2. Positions 61, 66, 85, and 88 each coordinate Zn(2+). K564 bears the N6-acetyllysine mark. The Gelsolin-like repeat unit spans residues 634-720 (PEPVLLDSSS…EHGGSQARFL (87 aa)).

It belongs to the SEC23/SEC24 family. SEC23 subfamily. As to quaternary structure, COPII is composed of at least five proteins: the Sec23/24 complex, the Sec13/31 complex and Sar1. Interacts with SAR1A. In terms of tissue distribution, ubiquitously expressed.

Its subcellular location is the cytoplasmic vesicle. It localises to the COPII-coated vesicle membrane. It is found in the endoplasmic reticulum membrane. The protein resides in the cytoplasm. The protein localises to the cytosol. Functionally, component of the coat protein complex II (COPII) which promotes the formation of transport vesicles from the endoplasmic reticulum (ER). The coat has two main functions, the physical deformation of the endoplasmic reticulum membrane into vesicles and the selection of cargo molecules for their transport to the Golgi complex. This Homo sapiens (Human) protein is Protein transport protein Sec23B.